The chain runs to 306 residues: Pantothenate kinase (306 aa).

ATP is bound at residue Gly-91–Ser-98.

Belongs to the prokaryotic pantothenate kinase family.

The protein localises to the cytoplasm. It catalyses the reaction (R)-pantothenate + ATP = (R)-4'-phosphopantothenate + ADP + H(+). The protein operates within cofactor biosynthesis; coenzyme A biosynthesis; CoA from (R)-pantothenate: step 1/5. In Streptococcus pyogenes serotype M5 (strain Manfredo), this protein is Pantothenate kinase.